Consider the following 271-residue polypeptide: Aquaporin-1 (271 aa).

Residues 1–11 (MASEFKKKLFW) are Cytoplasmic-facing. Residues 12-29 (RAVVAEFLAMILFVFISI) form a helical membrane-spanning segment. The Extracellular portion of the chain corresponds to 30 to 48 (GSALGFNYPVRNNQTAGAA). Asn-42 carries an N-linked (GlcNAc...) asparagine glycan. A helical membrane pass occupies residues 49 to 67 (QDNVKVSLAFGLSIATLAQ). Topologically, residues 68–70 (SVG) are cytoplasmic. Residues 71–84 (HISGAHLNPAVTLG) lie within the membrane without spanning it. Residues 78–80 (NPA) carry the NPA 1 motif. Over 85 to 92 (LLLSCQIS) the chain is Cytoplasmic. A helical membrane pass occupies residues 93 to 111 (ILRAVMYIIAQCVGAIVAT). At 112 to 135 (AILSGITSSLPDNSLGRNELAPGV) the chain is on the extracellular side. Residues 136-155 (NSGQGLGIEIIGTLQLVLCV) form a helical membrane-spanning segment. Residues 156-165 (LATTDRRRRD) are Cytoplasmic-facing. A helical membrane pass occupies residues 166–183 (LGGSGPLAIGLSVALGHL). Residues 184–188 (LAIDY) lie on the Extracellular side of the membrane. Residues 189–201 (TGCGINPARSFGS) lie within the membrane without spanning it. The short motif at 194 to 196 (NPA) is the NPA 2 element. Topologically, residues 202–208 (SVITHNF) are extracellular. Residues 209–226 (KDHWIFWVGPFIGGALAV) traverse the membrane as a helical segment. The Cytoplasmic portion of the chain corresponds to 227-271 (LIYDFILAPRSSDLTDRVKVWTSGQVEEYELDGDDINSRVEMKPK). Ser-249 carries the post-translational modification Phosphoserine. Tyr-255 carries the phosphotyrosine modification. Ser-264 is subject to Phosphoserine.

The protein belongs to the MIP/aquaporin (TC 1.A.8) family. Homotetramer; each monomer provides an independent water pore. Component of the ankyrin-1 complex in the erythrocyte, composed of ANK1, RHCE, RHAG, SLC4A1, EPB42, GYPA, GYPB and AQP1. Interacts with EPHB2; involved in endolymph production in the inner ear. Identified in a complex with STOM. Interacts (via the N-terminal) with ANK1 (via ANK 1-5 repeats). Interacts (via the C-terminal) with EPB42.

The protein localises to the cell membrane. The enzyme catalyses H2O(in) = H2O(out). It catalyses the reaction nitric oxide(out) = nitric oxide(in). The catalysed reaction is CO2(out) = CO2(in). It carries out the reaction glycerol(in) = glycerol(out). The enzyme catalyses H2O2(out) = H2O2(in). It catalyses the reaction K(+)(in) = K(+)(out). The catalysed reaction is Na(+)(in) = Na(+)(out). Functionally, forms a water channel that facilitates the transport of water across cell membranes, playing a crucial role in water homeostasis in various tissues. Could also be permeable to small solutes including hydrogen peroxide, glycerol and gases such as amonnia (NH3), nitric oxide (NO) and carbon dioxide (CO2). Recruited to the ankyrin-1 complex, a multiprotein complex of the erythrocyte membrane, it could be part of a CO2 metabolon, linking facilitated diffusion of CO2 across the membrane, anion exchange of Cl(-)/HCO3(-) and interconversion of dissolved CO2 and carbonic acid in the cytosol. In vitro, it shows non-selective gated cation channel activity and may be permeable to cations like K(+) and Na(+) in vivo. The protein is Aquaporin-1 of Canis lupus familiaris (Dog).